A 571-amino-acid chain; its full sequence is Arginine--tRNA ligase (571 aa).

Residues 122–132 (PNIAKEMHVGH) carry the 'HIGH' region motif.

It belongs to the class-I aminoacyl-tRNA synthetase family. As to quaternary structure, monomer.

It localises to the cytoplasm. It carries out the reaction tRNA(Arg) + L-arginine + ATP = L-arginyl-tRNA(Arg) + AMP + diphosphate. In Buchnera aphidicola subsp. Cinara cedri (strain Cc), this protein is Arginine--tRNA ligase.